A 1028-amino-acid chain; its full sequence is MAPETKGQRSISHFFKSQSSSQKLNKDDTEYSGNIIDLTNGDEKVSSRLANFEHKPNKSSKSPNELDTSKRKSSKDNEHVDGDPEPVKKKPRTSQSLSRSKSKPQSVGSNSKKLTPLEKQFVEMKQSNLDKILAIQVGYKFKFFGEDAVIASKILSIMLIPGNIKLDEYQHDRFAYCSIPDNRLHIHLKRLLNQGLKVGVAKQTETAAIKSIDSTNKSGLFEREITGVYTKATYMGDELLTGDPNINRTSITDDEMGDYIFCIDESHSKDIGMIAIQPITGDIIYDTFNDNVTRDELETRLVYLNPSEILVINNSTEISKETIKMINIVNNKVNIIHRPRRQQTDYTNEIYNFFNTIDEGKYKDLGEHYLLKFPNNIQSCMIELIKYLEEFKLSNIFTIISNVSCFSNSKTCLVLPSSTVQALEIFQNMTDPNSNKGSLIWLLNHTRTRMGNRLLVKWISKPLIDKAQIEERLQGIEDLTFKFNHFIDSLKNQLDKIGKASIDLEKNLIKVHYSSTYQLDKISRKEVYLLLKCFDDILSMIKQFGKPTNNILESIHSPLLLRIFDELMQLAKEDTVRCLLDMISADALDDSNLNDQKIKFFNLNYFKDQQIISQLSEISNVESLLNDELIEIRKMLKRPQLNYITSSKETYLVEVRNGKMVDSLPKDWIKINGTKTVSRFRSPEITRLHKQLQYHNDMLIRNCDKAFNAYLFKIDNNYEFFSKIIRNLSTFDCLLSLSAVSSINSNYARPKIVEDKQIIQMKNSRNPIIENLSVNYSNYISNDINISYDEDRVLIITGPNMGGKSTYVKQVALLVIMAQIGSYIPCDEATVGIFDSIFIRMGARDNILQNQSTFMIEMLECSHILKNMTSNSLIILDEIGRGTGTNDGIAIAYSILNYLIEEPRKPLTLFITHFPSLHVLEDKFKGIATNYHMGFHEVSKSNQEFPEVVFLYNLVRGVVGNSYGLNVAKLAGIPNSIINNAYTKSTEIRDAIESDWPKKLIKMIKSLREQNDARVELLEIEQLCNNID.

The disordered stretch occupies residues 1 to 114 (MAPETKGQRS…QSVGSNSKKL (114 aa)). Positions 10–23 (SISHFFKSQSSSQK) are enriched in low complexity. 2 stretches are compositionally biased toward basic and acidic residues: residues 41 to 56 (GDEKVSSRLANFEHKP) and 67 to 88 (DTSKRKSSKDNEHVDGDPEPVK). The segment covering 93-113 (TSQSLSRSKSKPQSVGSNSKK) has biased composition (polar residues). Residues 109 to 232 (SNSKKLTPLE…REITGVYTKA (124 aa)) are mispair-binding domain. An ATP-binding site is contributed by 798–805 (GPNMGGKS).

The protein belongs to the DNA mismatch repair MutS family. MSH3 subfamily. In terms of assembly, heterodimer consisting of MSH2-MSH3 (MutS beta). Forms a ternary complex with MutL alpha (MLH1-PMS1).

The protein resides in the nucleus. In terms of biological role, component of the post-replicative DNA mismatch repair system (MMR). Heterodimerizes with MSH2 to form MutS beta, which binds to DNA mismatches thereby initiating DNA repair. MSH3 provides substrate-binding and substrate specificity to the complex. When bound, the MutS beta heterodimer bends the DNA helix and shields approximately 20 base pairs. Acts mainly to repair insertion-deletion loops (IDLs) from 2 to 13 nucleotides in size, but can also repair base-base and single insertion-deletion mismatches that occur during replication. After mismatch binding, forms a ternary complex with the MutL alpha heterodimer, which is thought to be responsible for directing the downstream MMR events, including strand discrimination, excision, and resynthesis. ATP binding and hydrolysis play a pivotal role in mismatch repair functions. This chain is DNA mismatch repair protein MSH3 (MSH3), found in Debaryomyces hansenii (strain ATCC 36239 / CBS 767 / BCRC 21394 / JCM 1990 / NBRC 0083 / IGC 2968) (Yeast).